We begin with the raw amino-acid sequence, 640 residues long: 1-deoxy-D-xylulose-5-phosphate synthase (640 aa).

Thiamine diphosphate contacts are provided by residues His75 and 117–119 (GHA). Asp146 lines the Mg(2+) pocket. Residues 147–148 (AA), Asn175, and Glu370 contribute to the thiamine diphosphate site. Asn175 is a binding site for Mg(2+).

It belongs to the transketolase family. DXPS subfamily. In terms of assembly, homodimer. Mg(2+) serves as cofactor. It depends on thiamine diphosphate as a cofactor.

It catalyses the reaction D-glyceraldehyde 3-phosphate + pyruvate + H(+) = 1-deoxy-D-xylulose 5-phosphate + CO2. The protein operates within metabolic intermediate biosynthesis; 1-deoxy-D-xylulose 5-phosphate biosynthesis; 1-deoxy-D-xylulose 5-phosphate from D-glyceraldehyde 3-phosphate and pyruvate: step 1/1. Its function is as follows. Catalyzes the acyloin condensation reaction between C atoms 2 and 3 of pyruvate and glyceraldehyde 3-phosphate to yield 1-deoxy-D-xylulose-5-phosphate (DXP). The protein is 1-deoxy-D-xylulose-5-phosphate synthase of Chlamydia trachomatis serovar A (strain ATCC VR-571B / DSM 19440 / HAR-13).